The chain runs to 251 residues: Triosephosphate isomerase (251 aa).

Substrate is bound at residue 9-11 (NWK). The active-site Electrophile is histidine 96. Glutamate 167 functions as the Proton acceptor in the catalytic mechanism. Substrate-binding positions include glycine 173, serine 213, and 234-235 (GG).

The protein belongs to the triosephosphate isomerase family. As to quaternary structure, homodimer.

It is found in the cytoplasm. The enzyme catalyses D-glyceraldehyde 3-phosphate = dihydroxyacetone phosphate. Its pathway is carbohydrate biosynthesis; gluconeogenesis. The protein operates within carbohydrate degradation; glycolysis; D-glyceraldehyde 3-phosphate from glycerone phosphate: step 1/1. In terms of biological role, involved in the gluconeogenesis. Catalyzes stereospecifically the conversion of dihydroxyacetone phosphate (DHAP) to D-glyceraldehyde-3-phosphate (G3P). This chain is Triosephosphate isomerase, found in Phocaeicola vulgatus (strain ATCC 8482 / DSM 1447 / JCM 5826 / CCUG 4940 / NBRC 14291 / NCTC 11154) (Bacteroides vulgatus).